A 137-amino-acid chain; its full sequence is MSFMKEFREFAMRGNVVDLAVGVIIGAAFGRIVSSLVADIIMPPLGLLLGGVDFKQFHFVLRAAEGTIPAVVMNYGTFIQSIFDFVIVALAIFSAVKLMNKLRREKAEEEPATPPAPTTEEILLAEIRDLLKAQHTK.

The next 2 helical transmembrane spans lie at F10–G30 and G76–V96.

This sequence belongs to the MscL family. In terms of assembly, homopentamer.

Its subcellular location is the cell inner membrane. Channel that opens in response to stretch forces in the membrane lipid bilayer. May participate in the regulation of osmotic pressure changes within the cell. The polypeptide is Large-conductance mechanosensitive channel (Yersinia pseudotuberculosis serotype O:1b (strain IP 31758)).